A 1133-amino-acid chain; its full sequence is Sterol regulatory element-binding protein 1 (1133 aa).

The interval M1–E60 is transcriptional activation (acidic). Over M1–R476 the chain is Cytoplasmic. Residues T27–L35 carry the 9aaTAD motif. Residues L46 to L78 are disordered. Low complexity predominate over residues S68–L78. S97 and S116 each carry phosphoserine. The tract at residues L131 to T219 is disordered. Over residues S165–Q180 the composition is skewed to polar residues. 2 stretches are compositionally biased toward low complexity: residues P181 to P191 and Q203 to P217. An interaction with LMNA region spans residues Q227 to C486. Residues E317–L367 enclose the bHLH domain. Phosphoserine; by SIK1 occurs at positions 331 and 332. The tract at residues L367–S388 is leucine-zipper. S390 is subject to Phosphoserine; by AMPK. S396 is modified (phosphoserine; by SIK1). The interval V415–F456 is disordered. Residues D425 to P454 show a composition bias toward low complexity. S449 is modified (phosphoserine). Residues L477–G497 traverse the membrane as a helical segment. Over W498–P535 the chain is Lumenal. The helical transmembrane segment at L536–G556 threads the bilayer. Topologically, residues E557–S1133 are cytoplasmic. At S1046 the chain carries Phosphoserine.

The protein belongs to the SREBP family. As to quaternary structure, efficient DNA binding of the soluble transcription factor fragment requires dimerization with another bHLH protein. Interacts with CEBPA, the interaction produces a transcriptional synergy. Interacts with LMNA. Forms a tight complex with SCAP, the SCAP-SREBP complex, in the endoplasmic reticulum membrane and the Golgi apparatus. Interacts with PAQR3; the interaction anchors the SCAP-SREBP complex to the Golgi apparatus in low cholesterol conditions. Processed in the Golgi apparatus, releasing the protein from the membrane. At low cholesterol the SCAP-SREBP complex is recruited into COPII vesicles for export from the endoplasmic reticulum. In the Golgi, complex SREBPs are cleaved sequentially by site-1 (MBTPS1, S1P) and site-2 (MBTPS2, S2P) proteases. The first cleavage by site-1 protease occurs within the luminal loop, the second cleavage by site-2 protease occurs within the first transmembrane domain, releasing the transcription factor from the Golgi membrane. In terms of processing, phosphorylated by AMPK, leading to suppress protein processing and nuclear translocation, and repress target gene expression. Phosphorylation at Ser-396 by SIK1 represses activity possibly by inhibiting DNA-binding. Post-translationally, SCAP-free SREBF1 is ubiquitinated by the BCR(ARMC5) complex, leading to its degradation. Ubiquitinated; the nuclear form has a rapid turnover and is rapidly ubiquitinated and degraded by the proteasome in the nucleus.

The protein localises to the endoplasmic reticulum membrane. It localises to the golgi apparatus membrane. Its subcellular location is the cytoplasmic vesicle. It is found in the COPII-coated vesicle membrane. The protein resides in the nucleus. Its activity is regulated as follows. Activation by cleavage is down-regulated upon activation of SIRT3-dependent PRKAA1/AMPK-alpha signaling cascade which leads to inhibition of ATP-consuming lipogenesis to restore cellular energy balance. Precursor of the transcription factor form (Processed sterol regulatory element-binding protein 1), which is embedded in the endoplasmic reticulum membrane. Low sterol concentrations promote processing of this form, releasing the transcription factor form that translocates into the nucleus and activates transcription of genes involved in cholesterol biosynthesis and lipid homeostasis. In terms of biological role, key transcription factor that regulates expression of genes involved in cholesterol biosynthesis and lipid homeostasis. Binds to the sterol regulatory element 1 (SRE-1) (5'-ATCACCCCAC-3'). Has dual sequence specificity binding to both an E-box motif (5'-ATCACGTGA-3') and to SRE-1 (5'-ATCACCCCAC-3'). Regulates the promoters of genes involved in cholesterol biosynthesis and the LDL receptor (LDLR) pathway of sterol regulation. In Cricetulus griseus (Chinese hamster), this protein is Sterol regulatory element-binding protein 1.